A 381-amino-acid polypeptide reads, in one-letter code: Subtilisin J (381 aa).

Residues 1-29 (MRSKKLWISLLFALTLIFTMAFSNMSVQA) form the signal peptide. Residues 30-106 (AGKSSTEKKY…VEEDHIAHEY (77 aa)) constitute a propeptide that is removed on maturation. One can recognise an Inhibitor I9 domain in the interval 38-103 (KYIVGFKQTM…VAYVEEDHIA (66 aa)). Gln108 serves as a coordination point for Ca(2+). One can recognise a Peptidase S8 domain in the interval 111 to 380 (PYGISQIKAP…KGLINVQAAA (270 aa)). Asp138 serves as the catalytic Charge relay system. Asp147 is a binding site for Ca(2+). The active-site Charge relay system is His170. Ca(2+) contacts are provided by Leu181, Asn183, Ile185, Val187, Ala275, Tyr277, and Thr280. Ser327 serves as the catalytic Charge relay system.

This sequence belongs to the peptidase S8 family. The cofactor is Ca(2+).

It is found in the secreted. The enzyme catalyses Hydrolysis of proteins with broad specificity for peptide bonds, and a preference for a large uncharged residue in P1. Hydrolyzes peptide amides.. Its function is as follows. Subtilisin is an extracellular alkaline serine protease, it catalyzes the hydrolysis of proteins and peptide amides. This chain is Subtilisin J (aprJ), found in Geobacillus stearothermophilus (Bacillus stearothermophilus).